A 378-amino-acid chain; its full sequence is Alpha-D-ribose 1-methylphosphonate 5-triphosphate diphosphatase (378 aa).

It belongs to the metallo-dependent hydrolases superfamily.

The enzyme catalyses alpha-D-ribose 1-methylphosphonate 5-triphosphate + H2O = alpha-D-ribose 1-methylphosphonate 5-phosphate + diphosphate + H(+). In terms of biological role, catalyzes the hydrolysis of alpha-D-ribose 1-methylphosphonate triphosphate (RPnTP) to form alpha-D-ribose 1-methylphosphonate phosphate (PRPn) and diphosphate. In Escherichia coli (strain K12), this protein is Alpha-D-ribose 1-methylphosphonate 5-triphosphate diphosphatase (phnM).